The primary structure comprises 550 residues: CCR4-NOT transcription complex subunit 6-like-A (550 aa).

The interval 1–148 is required for interaction with cnot1, cnot3 and cnot7; that stretch reads MPKEKYDPPD…LYQEPDGMRK (148 aa). 4 LRR repeats span residues 52 to 73, 75 to 96, 98 to 120, and 121 to 143; these read HLTV…IAKL, NLVY…LGNV, SLRE…GRLF, and RLQT…YQEP. The segment at 153 to 550 is nuclease domain; it reads MLDNLSVHPE…INGVHLPSRR (398 aa). Glutamate 235 serves as a coordination point for Mg(2+). Residues glutamate 235, glutamate 271, histidine 355, and proline 360 each coordinate substrate. A Mg(2+)-binding site is contributed by aspartate 405. Residue aspartate 405 is the Proton donor/acceptor of the active site. The substrate site is built by asparagine 407, asparagine 474, and phenylalanine 479.

Belongs to the CCR4/nocturin family. As to quaternary structure, component of the CCR4-NOT complex. The cofactor is Mg(2+).

It localises to the cytoplasm. It is found in the nucleus. The catalysed reaction is Exonucleolytic cleavage of poly(A) to 5'-AMP.. Poly(A) nuclease with 3'-5' RNase activity. Catalytic component of the CCR4-NOT complex which is one of the major cellular mRNA deadenylases and is linked to various cellular processes including bulk mRNA degradation, miRNA-mediated repression, translational repression during translational initiation and general transcription regulation. Additional complex functions may be a consequence of its influence on mRNA expression. The protein is CCR4-NOT transcription complex subunit 6-like-A (cnot6l-a) of Xenopus laevis (African clawed frog).